We begin with the raw amino-acid sequence, 421 residues long: Bifunctional NAD biosynthesis protein NadR (421 aa).

Residues 57–224 are nicotinamide mononucleotide adenylyltransferase; it reads EKKVGVIFGK…KFIPKEARPF (168 aa). Residues 64–67, histidine 71, arginine 98, 139–152, 172–174, 199–201, 254–256, and 289–292 contribute to the NAD(+) site; these read FGKF, EDGIPSYPNGWQSW, SSE, FNV, SAW, and YIDY. Positions 225–421 are ribosylnicotinamide kinase; it reads FAKTVAILGG…TTFPIKGTSQ (197 aa).

In the N-terminal section; belongs to the bacterial NMN adenylyltransferase family. It in the C-terminal section; belongs to the bacterial RNK family. In terms of assembly, homotetramer.

The protein resides in the cell membrane. It localises to the cytoplasm. The enzyme catalyses beta-nicotinamide D-ribonucleotide + ATP + H(+) = diphosphate + NAD(+). It catalyses the reaction beta-nicotinamide D-riboside + ATP = beta-nicotinamide D-ribonucleotide + ADP + H(+). The protein operates within cofactor biosynthesis; NAD(+) biosynthesis [regulation]. It functions in the pathway cofactor biosynthesis; NAD(+) biosynthesis; NAD(+) from nicotinamide D-ribonucleotide: step 1/1. Feed-back regulated by NAD. At high levels of NAD the RN kinase activity is inhibited. In terms of biological role, this enzyme has two activities: nicotinamide mononucleotide (NMN) adenylyltransferase and ribosylnicotinamide (RN) kinase. The RN kinase activity catalyzes the phosphorylation of RN to form nicotinamide ribonucleotide. The NMN adenylyltransferase activity catalyzes the transfer of the AMP moiety of ATP to nicotinamide ribonucleotide to form NAD(+). This Haemophilus influenzae (strain ATCC 51907 / DSM 11121 / KW20 / Rd) protein is Bifunctional NAD biosynthesis protein NadR (nadR).